The sequence spans 671 residues: Anaphase-promoting complex subunit cut9 (671 aa).

Residues 1–24 form a disordered region; the sequence is MVVKRTQTDSRMQSTPGNHNHPDA. TPR repeat units follow at residues 83–114, 117–142, 150–173, 198–229, 234–257, 268–296, 306–334, 341–368, 373–402, 407–435, 442–470, 475–507, 513–545, and 550–579; these read REDY…LDIT, PNDA…LLTK, SACR…LNLL, LEAS…ALMV, YEAF…LVLK, AAFL…DYLS, DLLL…ILEI, VYPL…LVDR, AVTW…SSTM, GPAW…TAAR, LPYL…SYAL, PLLL…LVKK, KPWA…GLLL, and ANVH…SLAI. The disordered stretch occupies residues 622–643; sequence NLNTSDKSMSMEDQSGKVTESV.

In terms of assembly, the APC/C is composed of at least 13 subunits: apc1, apc2, nuc2, apc4, apc5, cut9, apc8, apc10, apc11, hcn1, apc13, apc14 and apc15. Homodimer. Interacts directly with nuc2 and hcn1. Post-translationally, phosphorylated.

The protein resides in the nucleus. Functionally, component of the anaphase-promoting complex/cyclosome (APC/C), a cell cycle-regulated E3 ubiquitin-protein ligase complex that controls progression through mitosis and the G1 phase of the cell cycle. The APC/C is thought to confer substrate specificity and, in the presence of ubiquitin-conjugating E2 enzymes, it catalyzes the formation of protein-ubiquitin conjugates that are subsequently degraded by the 26S proteasome. May play a pivotal role in the control of anaphase. The protein is Anaphase-promoting complex subunit cut9 (cut9) of Schizosaccharomyces pombe (strain 972 / ATCC 24843) (Fission yeast).